The sequence spans 324 residues: MTRETLLDRVIALLWKAEFTLSEKCDIRPRSFDVAARRGKTLLLVKVLSNIEGMSEETSQEMRRLSVLFNGSPIVIGEHTNDHPLEIGAVYLRYGIPCVNIETLHDFFIEEVPPLVYAAPGGLYVEIDGETLRSLREAKNISLGELAMALGVSRRTISKYESGMNATIEAALKLEEILDAPIACPVNMIVMFERTAKDADPSPNDLRNASALEKEALGTLMHIGFEVFHTTKAPFNALSQDDAAKMITGVSDYNEAMLKKAKFMSSLADVAGTYSLFIVKGPHRPKAVGNTLLIKSEELKQFDDRSDLFDLLLSREVKKANAGK.

In terms of domain architecture, HTH cro/C1-type spans 132 to 189 (LRSLREAKNISLGELAMALGVSRRTISKYESGMNATIEAALKLEEILDAPIACPVNMI). Residues 143–162 (LGELAMALGVSRRTISKYES) constitute a DNA-binding region (H-T-H motif).

The protein is Putative HTH-type transcriptional regulatory protein UNCMA_15260 of Methanocella arvoryzae (strain DSM 22066 / NBRC 105507 / MRE50).